The primary structure comprises 498 residues: Glycerol kinase (498 aa).

Thr-12 is an ADP binding site. ATP is bound by residues Thr-12, Thr-13, and Ser-14. Residue Thr-12 coordinates sn-glycerol 3-phosphate. Arg-16 provides a ligand contact to ADP. Sn-glycerol 3-phosphate-binding residues include Arg-82, Glu-83, Tyr-134, and Asp-244. Residues Arg-82, Glu-83, Tyr-134, Asp-244, and Gln-245 each coordinate glycerol. Residues Thr-266 and Gly-310 each contribute to the ADP site. 4 residues coordinate ATP: Thr-266, Gly-310, Gln-314, and Gly-411. Residues Gly-411 and Asn-415 each coordinate ADP.

This sequence belongs to the FGGY kinase family.

It carries out the reaction glycerol + ATP = sn-glycerol 3-phosphate + ADP + H(+). It functions in the pathway polyol metabolism; glycerol degradation via glycerol kinase pathway; sn-glycerol 3-phosphate from glycerol: step 1/1. With respect to regulation, inhibited by fructose 1,6-bisphosphate (FBP). Key enzyme in the regulation of glycerol uptake and metabolism. Catalyzes the phosphorylation of glycerol to yield sn-glycerol 3-phosphate. The polypeptide is Glycerol kinase (Azorhizobium caulinodans (strain ATCC 43989 / DSM 5975 / JCM 20966 / LMG 6465 / NBRC 14845 / NCIMB 13405 / ORS 571)).